The primary structure comprises 615 residues: Sodium-dependent neutral amino acid transporter B(0)AT3 (615 aa).

Over Met-1–Tyr-26 the chain is Cytoplasmic. Residues Leu-27–Cys-47 traverse the membrane as a helical segment. The Extracellular segment spans residues Gln-48–Gly-52. A helical membrane pass occupies residues Gly-53–Ile-73. At Glu-74 to Ser-105 the chain is on the cytoplasmic side. Residues Val-106 to Leu-126 form a helical membrane-spanning segment. The Extracellular portion of the chain corresponds to Asn-127–Thr-177. Asn-143 and Asn-167 each carry an N-linked (GlcNAc...) asparagine glycan. A helical membrane pass occupies residues Ile-178 to Ile-198. Over Arg-199–Lys-206 the chain is Cytoplasmic. Residues Val-207–Leu-227 form a helical membrane-spanning segment. The Extracellular portion of the chain corresponds to Thr-228–Asp-255. A helical membrane pass occupies residues Ala-256–Ser-276. Topologically, residues Tyr-277 to Ala-288 are cytoplasmic. A helical membrane pass occupies residues Val-289–Val-309. Residues Met-310–Gly-397 lie on the Extracellular side of the membrane. Asn-353 carries N-linked (GlcNAc...) asparagine glycosylation. A helical transmembrane segment spans residues Ala-398–Phe-418. At Gly-419–Glu-441 the chain is on the cytoplasmic side. A helical membrane pass occupies residues Val-442–Ser-462. Residues Gly-463 to Ser-472 lie on the Extracellular side of the membrane. The helical transmembrane segment at Phe-473–Ile-493 threads the bilayer. At Tyr-494 to Arg-520 the chain is on the cytoplasmic side. Residues Val-521–Thr-541 form a helical membrane-spanning segment. The Extracellular segment spans residues Pro-542–Thr-570. A helical transmembrane segment spans residues Cys-571–Leu-591. Residues Ser-592 to Cys-615 are Cytoplasmic-facing.

The protein belongs to the sodium:neurotransmitter symporter (SNF) (TC 2.A.22) family. SLC6A18 subfamily. In terms of assembly, interacts with CLTRN; this interaction regulates the trafficking of SLC6A18 to the cell membrane and its activity. In terms of tissue distribution, expressed predominantly in kidney.

It is found in the apical cell membrane. The protein localises to the cell membrane. It carries out the reaction L-alanine(out) + chloride(out) + 2 Na(+)(out) = L-alanine(in) + chloride(in) + 2 Na(+)(in). The enzyme catalyses glycine(out) + chloride(out) + 2 Na(+)(out) = glycine(in) + chloride(in) + 2 Na(+)(in). It catalyses the reaction L-methionine(out) + chloride(out) + 2 Na(+)(out) = L-methionine(in) + chloride(in) + 2 Na(+)(in). The catalysed reaction is L-valine(out) + chloride(out) + 2 Na(+)(out) = L-valine(in) + chloride(in) + 2 Na(+)(in). It carries out the reaction L-isoleucine(out) + chloride(out) + 2 Na(+)(out) = L-isoleucine(in) + chloride(in) + 2 Na(+)(in). The enzyme catalyses L-serine(out) + chloride(out) + 2 Na(+)(out) = L-serine(in) + chloride(in) + 2 Na(+)(in). It catalyses the reaction L-leucine(out) + chloride(out) + 2 Na(+)(out) = L-leucine(in) + chloride(in) + 2 Na(+)(in). In terms of biological role, symporter that transports one amino acid molecule together with two sodium and one chloride ions in kidneys and plays a role in the neutral amino acids reabsorption. Preferentially transports neutral amino acids such as L-glycine and L-alanine but also other neutral amino acids. Required CLTRN for cell surface expression and for its amino acid transporter activity. The transport mechanism is pH-independent. The sequence is that of Sodium-dependent neutral amino acid transporter B(0)AT3 from Mus musculus (Mouse).